The following is a 360-amino-acid chain: MTATLILLLLAQVSWAGPFQQRGLFDFMLEDEASGIGPDERAPELPDLDMLGPVCPFRCQCHLRVVQCSDLGLDKVPKDLPPDTTLLDLQNNKITEIKDGDFKNLKNLHALILVNNKISKISPGAFTPLVKLERLYLSKNHLKELPEKMPKSLQELRAHENEITKVRKSVFSGMNQMIVIELGTNPLKSSGIENGAFQGMKKLSYIRIADTNITTIPQGLPPSLTELHLDGNKITKIDASSLKGLNNLAKLGLSFNDISAVDNGSLANAPHLRELHLDNNKLIRVPGGLADHKYIQVVYLHNNNISVVGANDFCPPGYNTKKASYSGVSLFSNPVQYWEIQPSTFRCVYMRSAIQLGNYK.

The signal sequence occupies residues 1–16 (MTATLILLLLAQVSWA). Residues 17–30 (GPFQQRGLFDFMLE) constitute a propeptide that is removed on maturation. O-linked (Xyl...) (glycosaminoglycan) serine glycosylation occurs at serine 34. 2 disulfides stabilise this stretch: cysteine 55/cysteine 61 and cysteine 59/cysteine 68. LRR repeat units follow at residues 74–94 (DKVP…NNKI), 95–118 (TEIK…NNKI), 119–142 (SKIS…KNHL), 143–163 (KELP…ENEI), 164–187 (TKVR…TNPL), 188–213 (KSSG…DTNI), 214–234 (TTIP…GNKI), 235–258 (TKID…FNDI), 259–282 (SAVD…NNKL), 283–305 (IRVP…NNNI), 306–335 (SVVG…SNPV), and 336–360 (QYWE…GNYK). Asparagine 212 carries N-linked (GlcNAc...) asparagine glycosylation. N-linked (GlcNAc...) asparagine glycosylation is found at asparagine 263 and asparagine 304. Residues cysteine 314 and cysteine 347 are joined by a disulfide bond.

This sequence belongs to the small leucine-rich proteoglycan (SLRP) family. SLRP class I subfamily. As to quaternary structure, binds to type I and type II collagen, fibronectin and TGF-beta. Forms a ternary complex with MFAP2 and ELN. Interacts with DPT. The attached glycosaminoglycan chain can be either chondroitin sulfate or dermatan sulfate depending upon the tissue of origin.

It is found in the secreted. The protein localises to the extracellular space. It localises to the extracellular matrix. Functionally, may affect the rate of fibrils formation. The polypeptide is Decorin (DCN) (Oryctolagus cuniculus (Rabbit)).